The primary structure comprises 126 residues: Large ribosomal subunit protein bL17 (126 aa).

Belongs to the bacterial ribosomal protein bL17 family. In terms of assembly, part of the 50S ribosomal subunit. Contacts protein L32.

In Lactococcus lactis subsp. lactis (strain IL1403) (Streptococcus lactis), this protein is Large ribosomal subunit protein bL17.